We begin with the raw amino-acid sequence, 820 residues long: Leucine--tRNA ligase (820 aa).

The short motif at proline 40–histidine 51 is the 'HIGH' region element. A 'KMSKS' region motif is present at residues lysine 601–serine 605. An ATP-binding site is contributed by lysine 604.

Belongs to the class-I aminoacyl-tRNA synthetase family.

Its subcellular location is the cytoplasm. It catalyses the reaction tRNA(Leu) + L-leucine + ATP = L-leucyl-tRNA(Leu) + AMP + diphosphate. In Chlamydia caviae (strain ATCC VR-813 / DSM 19441 / 03DC25 / GPIC) (Chlamydophila caviae), this protein is Leucine--tRNA ligase.